We begin with the raw amino-acid sequence, 658 residues long: Biosynthetic arginine decarboxylase (658 aa).

Position 127 is an N6-(pyridoxal phosphate)lysine (Lys127). Residue 307-317 (FDVGGGLGVDY) coordinates substrate.

It belongs to the Orn/Lys/Arg decarboxylase class-II family. SpeA subfamily. The cofactor is Mg(2+). Requires pyridoxal 5'-phosphate as cofactor.

It carries out the reaction L-arginine + H(+) = agmatine + CO2. Its pathway is amine and polyamine biosynthesis; agmatine biosynthesis; agmatine from L-arginine: step 1/1. In terms of biological role, catalyzes the biosynthesis of agmatine from arginine. In Salmonella typhi, this protein is Biosynthetic arginine decarboxylase.